Reading from the N-terminus, the 638-residue chain is Probable ATP-binding protein YheS (638 aa).

ABC transporter domains lie at 2 to 246 and 313 to 531; these read IIFS…AQQT and VMIE…STSE. ATP is bound by residues 34-41 and 349-356; these read GKNGCGKS and GKNGAGKS. The tract at residues 525-563 is disordered; that stretch reads EQNSTSENKVSEKVGDNENSVQNRKEQKRREAELRQQTA. Residues 547-558 show a composition bias toward basic and acidic residues; it reads NRKEQKRREAEL.

This sequence belongs to the ABC transporter superfamily. ABCF family. YheS subfamily.

In terms of biological role, genetic data indicate it may be involved in ribosome assembly or function. This chain is Probable ATP-binding protein YheS, found in Haemophilus influenzae (strain ATCC 51907 / DSM 11121 / KW20 / Rd).